The primary structure comprises 340 residues: Phosphoribosylformylglycinamidine cyclo-ligase (340 aa).

This sequence belongs to the AIR synthase family.

It is found in the cytoplasm. It carries out the reaction 2-formamido-N(1)-(5-O-phospho-beta-D-ribosyl)acetamidine + ATP = 5-amino-1-(5-phospho-beta-D-ribosyl)imidazole + ADP + phosphate + H(+). Its pathway is purine metabolism; IMP biosynthesis via de novo pathway; 5-amino-1-(5-phospho-D-ribosyl)imidazole from N(2)-formyl-N(1)-(5-phospho-D-ribosyl)glycinamide: step 2/2. The protein is Phosphoribosylformylglycinamidine cyclo-ligase of Streptococcus pyogenes serotype M1.